The primary structure comprises 181 residues: ADP-ribosylation factor-like protein 1 (181 aa).

A lipid anchor (N-myristoyl glycine) is attached at Gly2. GTP-binding positions include 24-31 (GLDGAGKT), 45-48 (TIPT), Gly70, 126-129 (NKQD), and 160-161 (AT). Thr31 and Thr48 together coordinate Mg(2+).

It belongs to the small GTPase superfamily. Arf family. In terms of assembly, the GTP-bound form interacts with GOLGA1. The GTP-bound form interacts with GOLGA4 and RGPD8. The GTP-bound form directly interacts with ARFIP2. Binds to SCOC, preferentially in its GTP-bound form. May interact with UNC119. Interacts with ARFIP1; this interaction directs ARFIP1 to the trans-Golgi membranes. Interacts with ARFGEF1 (via N-terminus).

The protein localises to the golgi apparatus membrane. It localises to the golgi apparatus. It is found in the trans-Golgi network membrane. The protein resides in the membrane. Its function is as follows. GTP-binding protein that recruits several effectors, such as golgins, arfaptins and Arf-GEFs to the trans-Golgi network, and modulates their functions at the Golgi complex. Plays thereby a role in a wide range of fundamental cellular processes, including cell polarity, innate immunity, or protein secretion mediated by arfaptins, which were shown to play a role in maintaining insulin secretion from pancreatic beta cells. The chain is ADP-ribosylation factor-like protein 1 (ARL1) from Bos taurus (Bovine).